We begin with the raw amino-acid sequence, 168 residues long: Protein-export protein SecB (168 aa).

It belongs to the SecB family. As to quaternary structure, homotetramer, a dimer of dimers. One homotetramer interacts with 1 SecA dimer.

It localises to the cytoplasm. One of the proteins required for the normal export of preproteins out of the cell cytoplasm. It is a molecular chaperone that binds to a subset of precursor proteins, maintaining them in a translocation-competent state. It also specifically binds to its receptor SecA. The chain is Protein-export protein SecB from Haemophilus influenzae (strain PittGG).